A 39-amino-acid chain; its full sequence is MTIDKTYPIFTVRWLTVHGLAVPTVSFLGSISAMQFIQR.

The chain crosses the membrane as a helical span at residues 14–30; that stretch reads WLTVHGLAVPTVSFLGS. His18 is a heme binding site.

This sequence belongs to the PsbE/PsbF family. In terms of assembly, heterodimer of an alpha subunit and a beta subunit. PSII is composed of 1 copy each of membrane proteins PsbA, PsbB, PsbC, PsbD, PsbE, PsbF, PsbH, PsbI, PsbJ, PsbK, PsbL, PsbM, PsbT, PsbX, PsbY, PsbZ, Psb30/Ycf12, at least 3 peripheral proteins of the oxygen-evolving complex and a large number of cofactors. It forms dimeric complexes. Heme b is required as a cofactor.

Its subcellular location is the plastid. It is found in the chloroplast thylakoid membrane. Its function is as follows. This b-type cytochrome is tightly associated with the reaction center of photosystem II (PSII). PSII is a light-driven water:plastoquinone oxidoreductase that uses light energy to abstract electrons from H(2)O, generating O(2) and a proton gradient subsequently used for ATP formation. It consists of a core antenna complex that captures photons, and an electron transfer chain that converts photonic excitation into a charge separation. The polypeptide is Cytochrome b559 subunit beta (Cucumis sativus (Cucumber)).